The chain runs to 48 residues: Piguamerin (48 aa).

5 disulfides stabilise this stretch: Cys-3/Cys-14, Cys-8/Cys-19, Cys-21/Cys-41, Cys-26/Cys-45, and Cys-30/Cys-47. The Antistasin-like domain occupies 19–47 (CVCVIGQCRKYCPNGFKKDENGCTFPCTC).

Belongs to the protease inhibitor I15 (antistasin) family.

Its subcellular location is the secreted. Inhibits plasma and tissue kallikrein, and trypsin. May be involved in leech hematophagia. The sequence is that of Piguamerin from Hirudo nipponia (Korean blood-sucking leech).